A 68-amino-acid chain; its full sequence is MIVSLRCCLLLVALLITVETAIMSKRDIVCSVSGDVACNLECELLHKKKGSCDENGACTCFNKKRETE.

A signal peptide spans 1–20; that stretch reads MIVSLRCCLLLVALLITVET. 3 cysteine pairs are disulfide-bonded: cysteine 30-cysteine 52, cysteine 38-cysteine 58, and cysteine 42-cysteine 60.

The protein belongs to the invertebrate defensin family. Expressed by the venom gland.

It localises to the secreted. In terms of biological role, antibacterial peptide mostly active against Gram-positive bacteria. This Ethmostigmus rubripes (Giant centipede) protein is U-scoloptoxin(02)-Er1a.